We begin with the raw amino-acid sequence, 674 residues long: Endopolyphosphatase (674 aa).

The Cytoplasmic segment spans residues 1–21 (MVVVGKSEVRNVSMSRPKKKS). Propeptides (removed in mature form) lie at residues 1 to 83 (MVVV…VIIK) and 385 to 674 (EQST…YKDD). A Glycyl lysine isopeptide (Lys-Gly) (interchain with G-Cter in ubiquitin) cross-link involves residue Lys-6. A helical; Signal-anchor for type II membrane protein membrane pass occupies residues 22–42 (LIAILSTCVLFFLVFIIGAKF). Over 43–674 (QYVSVFSKFL…SFASSGYKDD (632 aa)) the chain is Vacuolar. Residue Asn-58 is glycosylated (N-linked (GlcNAc...) asparagine). Residues 384-403 (MEQSTRVQQGEDSNEEDEET) are disordered. 2 N-linked (GlcNAc...) asparagine glycosylation sites follow: Asn-505 and Asn-511.

It belongs to the endopolyphosphatase PPN1 family. Homotetramer. Interacts with PPN2. It depends on Mn(2+) as a cofactor. The cofactor is Mg(2+). Requires Co(2+) as cofactor. Zn(2+) serves as cofactor. Post-translationally, processing by proteases in the vacuole is required for activation. In terms of processing, ubiquitinated. Ubiquitination mediates sorting into internal vesicles in late endosomes. TUL1 and RSP5 are required for ubiquitination. Other cytoplasmic Lys residues than Lys-6 may also be ubiquitinated. N-glycosylated. N-glycosylation is essential for the protease-mediated maturation.

It localises to the vacuole membrane. Its subcellular location is the cytoplasm. It carries out the reaction [phosphate](n+1) + n H2O = (n+1) phosphate + n H(+). The catalysed reaction is [phosphate](n) + H2O = [phosphate](n-1) + phosphate + H(+). The enzyme catalyses dATP + H2O = dADP + phosphate + H(+). Its activity is regulated as follows. Inhibited by heparin and EDTA. In terms of biological role, catalyzes the hydrolysis of inorganic polyphosphate (polyP) chains of many hundreds of phosphate residues into shorter lengths. Has both exopolyphosphatase and endopolyphosphatase activities at different ratios depending on divalent cations by cleaving phosphate from the chain end and by fragmenting long-chain polymers into shorter ones, respectively. The limited digestion products are 1 and 3 P(i) residues. Also releases phosphate from dATP. dATP phosphohydrolase activity is about 7-fold lower than the exopolyphosphatase activity. The sequence is that of Endopolyphosphatase from Saccharomyces cerevisiae (strain ATCC 204508 / S288c) (Baker's yeast).